The primary structure comprises 465 residues: MSFLVAIVGRANVGKSTLFNVLTNSHDALVFDFEGVTRDRQYGQAKYDDLDYLVVDTGGISDKDVGFDEFMAKQSQIAIDEANLVFFVVDGRSGLTTGDEYVASLLRQKDKKVVVVVNKVDGTDEEAAMAEFYSFGFDKVFAISAAHRRNTQKLVDKFLKKPLNEYYQDYTQTQEHKEQQRHGIHFSLIGRPNVGKSTLTNRMLGEDRVVVFDMPGTTIDSVSIPFERHGQKYTIVDTAGVRKRGKVKQTLEKFSVIKTLQAIQDSNVVVAVVDARQGISDQDLSLIHFAIKNGRALVLAVNKWDGMTEEDRIQVKQDLKRKLFFLQDYVDIHFISALHGTNVGHVFESIDTAYACANKKITTADATRLMQLAVEAHSPPMVGKFRIKLKYAHVGGHNPPVIVIHGNQVSRLPNSYKRYLENFFREALDFRGTPIVFEFKQSENPFADRKNKRSKDEGSKSKKVK.

2 consecutive EngA-type G domains span residues 3–166 and 184–358; these read FLVA…LNEY and IHFS…ACAN. GTP is bound by residues 9 to 16, 56 to 60, 118 to 121, 190 to 197, 237 to 241, and 302 to 305; these read GRANVGKS, DTGGI, NKVD, GRPNVGKS, DTAGV, and NKWD. The 85-residue stretch at 359–443 folds into the KH-like domain; the sequence is KKITTADATR…PIVFEFKQSE (85 aa). The disordered stretch occupies residues 446–465; it reads FADRKNKRSKDEGSKSKKVK.

The protein belongs to the TRAFAC class TrmE-Era-EngA-EngB-Septin-like GTPase superfamily. EngA (Der) GTPase family. As to quaternary structure, associates with the 50S ribosomal subunit.

Its function is as follows. GTPase that plays an essential role in the late steps of ribosome biogenesis. The sequence is that of GTPase Der from Francisella tularensis subsp. tularensis (strain WY96-3418).